Here is a 618-residue protein sequence, read N- to C-terminus: Grainyhead-like protein 1 homolog (618 aa).

Residues 1 to 91 are transcription activation; that stretch reads MTQEYDNKRP…EVEHPEPDHS (91 aa). Residues 74-92 show a composition bias toward basic and acidic residues; sequence RRSSTAKPEVEHPEPDHSK. The interval 74–94 is disordered; the sequence is RRSSTAKPEVEHPEPDHSKRN. Threonine 208 carries the post-translational modification Phosphothreonine. The Grh/CP2 DB domain maps to 248-474; sequence SGNNFEYTLE…DLDTQPVLFI (227 aa). 2 interaction with DNA regions span residues 380 to 389 and 427 to 430; these read TDFSSQKGVK and RKIR.

The protein belongs to the grh/CP2 family. Grainyhead subfamily. Binds DNA as homodimer. Homodimer, also forms heterodimers with GRHL2 or GRHL3. In terms of processing, methylation at Arg-9 and Lys-116 may be involved in regulating transcriptional activation.

It is found in the nucleus. Functionally, transcription factor involved in epithelial development. Binds directly to the consensus DNA sequence 5'-AACCGGTT-3'. Important regulator of DSG1 in the context of hair anchorage and epidermal differentiation, participates in the maintenance of the skin barrier. There is no genetic interaction with GRHL3, nor functional cooperativity due to diverse target gene selectivity during epithelia development. May play a role in regulating glucose homeostasis and insulin signaling. This Pongo abelii (Sumatran orangutan) protein is Grainyhead-like protein 1 homolog (GRHL1).